The sequence spans 829 residues: MKMTRRAFVKANAAASAAAVAGITLPASATNLIASSDQTKITWDKAPCRFCGTGCSVLVGTQNGKVVATQGDPEAPVNKGLNCIKGYFLSKIMYGQDRLTKPLLRMKDGKYSKDGDFAPVSWDTAFDIMAEKWKASLEKKGPTSIGMFGSGQWTVMEGYAAAKMMKAGFRSNNIDPNARHCMASAVVGFMRAFGIDEPMGCYDDFENADAFVLWGSNMAEMHPVLWTRITDRRLSHPHVKVNVLSTYYHRSFELADHGYIFNPQSDLAIANFIANYIIENDAVNWDFVNKHTNFTQADTDIGYGLRDDDPLQKAAKNPNSGKLTSISFEEYKKSVAPYTVEKASEISGVEKEKLIELAKQYADPNTKVMSLWTMGMNQHTRGVWMNNLIYNIHLLTGKIATPGNSPFSLTGQPSACGTAREVGTFAHRLPADMVVANPKHRKIAEDIWKLPEGTIPPKPGFHAVLQDRMLHDGVLNCYWVQCNNNMQAGPNINTERLPGYRNPENFIVVSDPYPTATAQAADLVLPTAMWIEKEGAYGNAERRTQAWYQQVETIGDAKSDLWQVMEFAKRFKMEEVWPEELLAKAPEYRGKTMYDMLFKNGQVDKFPIEEAREMNDDAHHFGYYVQKGLFEEYATFGRGHGHDLAPYDVYHTVRGLRWPVVDGKETQWRFKEGSDPYAKAGSGWDFYGNADGKAKIISAPYEAPPEVPNEEFDLWLCTGRVLEHWHTGTMTRRVPELYKAVPDAVVYMHPADAKKRNVRRGEEVLIANKRGEVRVRVETRGRNRPPEGLVFVPFFDARILINKLILDATDPLSKQTDFKKCPVKITKIA.

A signal peptide (tat-type signal) is located at residues 1 to 29 (MKMTRRAFVKANAAASAAAVAGITLPASA). The 57-residue stretch at 41–97 (ITWDKAPCRFCGTGCSVLVGTQNGKVVATQGDPEAPVNKGLNCIKGYFLSKIMYGQD) folds into the 4Fe-4S Mo/W bis-MGD-type domain. Residues C48, C51, C55, and C83 each coordinate [4Fe-4S] cluster. Mo-bis(molybdopterin guanine dinucleotide) contacts are provided by residues K85, Q152, N177, C181, 214–221 (WGSNMAEM), 245–249 (STYYH), 264–266 (QSD), M374, Q378, N484, 510–511 (SD), K533, D560, and 718–727 (TGRVLEHWHT). F794 contacts substrate. The Mo-bis(molybdopterin guanine dinucleotide) site is built by N802 and K819.

The protein belongs to the prokaryotic molybdopterin-containing oxidoreductase family. NasA/NapA/NarB subfamily. In terms of assembly, component of the periplasmic nitrate reductase NapAB complex composed of NapA and NapB. The cofactor is [4Fe-4S] cluster. Mo-bis(molybdopterin guanine dinucleotide) serves as cofactor. Predicted to be exported by the Tat system. The position of the signal peptide cleavage has not been experimentally proven.

The protein resides in the periplasm. It carries out the reaction 2 Fe(II)-[cytochrome] + nitrate + 2 H(+) = 2 Fe(III)-[cytochrome] + nitrite + H2O. In terms of biological role, catalytic subunit of the periplasmic nitrate reductase complex NapAB. Receives electrons from NapB and catalyzes the reduction of nitrate to nitrite. The protein is Periplasmic nitrate reductase of Vibrio campbellii (strain ATCC BAA-1116).